A 344-amino-acid polypeptide reads, in one-letter code: E3 ubiquitin-protein ligase RING2-A (344 aa).

The segment at 2–181 (ATPVNAQCSS…EDNCDSRSHV (180 aa)) is interaction with HIP2. The RING-type zinc-finger motif lies at 48-88 (CPICLDMLKNTMTTKECLHRFCSDCIVTALRSGNKECPTCR). Residues 90–95 (KLVSKR) are interaction with nucleosomes via an acidic patch on histone H2A and histone H2B. A disordered region spans residues 148–230 (QAMHRAQRVR…DPPGGGETGS (83 aa)). Positions 180–192 (HVSNPSVHSNQEA) are enriched in polar residues.

In terms of assembly, component of chromatin-associated Polycomb (PcG) complexes. Component of a PRC1-like complex. Component of some MLL1/MLL complex.

The protein localises to the nucleus. The protein resides in the cytoplasm. It is found in the chromosome. The catalysed reaction is S-ubiquitinyl-[E2 ubiquitin-conjugating enzyme]-L-cysteine + [acceptor protein]-L-lysine = [E2 ubiquitin-conjugating enzyme]-L-cysteine + N(6)-ubiquitinyl-[acceptor protein]-L-lysine.. The protein operates within protein modification; protein ubiquitination. E3 ubiquitin-protein ligase that mediates monoubiquitination of 'Lys-119' of histone H2A (H2AK119Ub), thereby playing a central role in histone code and gene regulation. H2AK119Ub gives a specific tag for epigenetic transcriptional repression. Essential component of a Polycomb group (PcG) multiprotein PRC1-like complex, a complex class required to maintain the transcriptionally repressive state of many genes, including Hox genes, throughout development. PcG PRC1 complex acts via chromatin remodeling and modification of histones, rendering chromatin heritably changed in its expressibility. The protein is E3 ubiquitin-protein ligase RING2-A (rnf2-a) of Xenopus laevis (African clawed frog).